The chain runs to 638 residues: Chaperone protein DnaK (638 aa).

T199 carries the phosphothreonine; by autocatalysis modification. Positions 600–638 (EINQKKSEENLKKEDTSSESKKDENVVDAEFEEIKDPKK) are disordered. Basic and acidic residues predominate over residues 602 to 624 (NQKKSEENLKKEDTSSESKKDEN).

It belongs to the heat shock protein 70 family.

Functionally, acts as a chaperone. This Buchnera aphidicola subsp. Schizaphis graminum (strain Sg) protein is Chaperone protein DnaK.